A 392-amino-acid polypeptide reads, in one-letter code: Probable tRNA sulfurtransferase (392 aa).

The region spanning 60–162 (QQVINDLQQV…HDCAIVYGHK (103 aa)) is the THUMP domain. ATP contacts are provided by residues 180-181 (LL), 205-206 (TF), Arg264, Gly286, and Gln295.

Belongs to the ThiI family.

The protein resides in the cytoplasm. It carries out the reaction [ThiI sulfur-carrier protein]-S-sulfanyl-L-cysteine + a uridine in tRNA + 2 reduced [2Fe-2S]-[ferredoxin] + ATP + H(+) = [ThiI sulfur-carrier protein]-L-cysteine + a 4-thiouridine in tRNA + 2 oxidized [2Fe-2S]-[ferredoxin] + AMP + diphosphate. It catalyses the reaction [ThiS sulfur-carrier protein]-C-terminal Gly-Gly-AMP + S-sulfanyl-L-cysteinyl-[cysteine desulfurase] + AH2 = [ThiS sulfur-carrier protein]-C-terminal-Gly-aminoethanethioate + L-cysteinyl-[cysteine desulfurase] + A + AMP + 2 H(+). It functions in the pathway cofactor biosynthesis; thiamine diphosphate biosynthesis. Catalyzes the ATP-dependent transfer of a sulfur to tRNA to produce 4-thiouridine in position 8 of tRNAs, which functions as a near-UV photosensor. Also catalyzes the transfer of sulfur to the sulfur carrier protein ThiS, forming ThiS-thiocarboxylate. This is a step in the synthesis of thiazole, in the thiamine biosynthesis pathway. The sulfur is donated as persulfide by IscS. The sequence is that of Probable tRNA sulfurtransferase from Ureaplasma urealyticum serovar 10 (strain ATCC 33699 / Western).